The primary structure comprises 220 residues: MTEQKALVKRITNETKIQIAISLKGGPLAIEHSIFPEKEAEAVAEQATQSQVINVHTGIGFLDHMIHALAKHSGWSLIVECIGDLHIDDHHTTEDCGIALGQAFKEALGAVRGVKRFGSGFAPLDEALSRAVVDLSNRPYAVVELGLQREKVGDLSCEMIPHFLESFAEASRITLHVDCLRGKNDHHRSESAFKALAVAIREATSPNGTNDVPSTKGVLM.

Substrate-binding positions include Glu-14, 64–72 (HMIHALAKH), 90–94 (HHTTE), Arg-116, and Arg-138. Residues His-64, His-90, His-91, and Glu-94 each contribute to the Mn(2+) site. Mn(2+) contacts are provided by His-162, His-186, His-187, and Glu-190. Residues 186 to 194 (HHRSESAFK) and 214 to 216 (STK) each bind substrate.

The protein belongs to the imidazoleglycerol-phosphate dehydratase family. Requires Mn(2+) as cofactor.

The enzyme catalyses D-erythro-1-(imidazol-4-yl)glycerol 3-phosphate = 3-(imidazol-4-yl)-2-oxopropyl phosphate + H2O. It participates in amino-acid biosynthesis; L-histidine biosynthesis; L-histidine from 5-phospho-alpha-D-ribose 1-diphosphate: step 6/9. The protein is Imidazoleglycerol-phosphate dehydratase of Saccharomyces cerevisiae (strain ATCC 204508 / S288c) (Baker's yeast).